The chain runs to 204 residues: MTLVKICGITDLDTARTAVDAGADALGFVFAPGRRRIAPDTARAIIRRLPPEVLTVGVFVDEDPETVQGIAAHCGLGALQFHGRESPEYCRGFREKVIKAFGVGNASVRELERAEEYPVWCLLLDTFSPGRPGGTGRVFDWRLIESLKFSRPVILAGGLNPGNVQAAIAAVRPYGVDVSTGVETGGLKDPAKIRSFIKLAREAL.

This sequence belongs to the TrpF family.

It catalyses the reaction N-(5-phospho-beta-D-ribosyl)anthranilate = 1-(2-carboxyphenylamino)-1-deoxy-D-ribulose 5-phosphate. Its pathway is amino-acid biosynthesis; L-tryptophan biosynthesis; L-tryptophan from chorismate: step 3/5. This chain is N-(5'-phosphoribosyl)anthranilate isomerase, found in Desulforudis audaxviator (strain MP104C).